Here is a 200-residue protein sequence, read N- to C-terminus: UPF0301 protein Veis_1517 (200 aa).

It belongs to the UPF0301 (AlgH) family.

The sequence is that of UPF0301 protein Veis_1517 from Verminephrobacter eiseniae (strain EF01-2).